A 142-amino-acid polypeptide reads, in one-letter code: Large ribosomal subunit protein uL11 (142 aa).

It belongs to the universal ribosomal protein uL11 family. In terms of assembly, part of the ribosomal stalk of the 50S ribosomal subunit. Interacts with L10 and the large rRNA to form the base of the stalk. L10 forms an elongated spine to which L12 dimers bind in a sequential fashion forming a multimeric L10(L12)X complex. One or more lysine residues are methylated.

Its function is as follows. Forms part of the ribosomal stalk which helps the ribosome interact with GTP-bound translation factors. The sequence is that of Large ribosomal subunit protein uL11 from Bartonella bacilliformis (strain ATCC 35685 / KC583 / Herrer 020/F12,63).